The chain runs to 678 residues: Exoribonuclease 2 (678 aa).

Positions 193-521 (REDLTALPFV…INHRLLKAHI (329 aa)) constitute an RNB domain. An S1 motif domain is found at 568–650 (ETRFQAEIFD…ENRSLVGKPT (83 aa)). Residues 659 to 678 (ETQTSAEQPAEGAENNEPQV) are disordered.

It belongs to the RNR ribonuclease family. RNase II subfamily.

It is found in the cytoplasm. It catalyses the reaction Exonucleolytic cleavage in the 3'- to 5'-direction to yield nucleoside 5'-phosphates.. Involved in mRNA degradation. Hydrolyzes single-stranded polyribonucleotides processively in the 3' to 5' direction. This chain is Exoribonuclease 2, found in Vibrio cholerae serotype O1 (strain ATCC 39315 / El Tor Inaba N16961).